The sequence spans 142 residues: Large ribosomal subunit protein uL13 (142 aa).

It belongs to the universal ribosomal protein uL13 family. In terms of assembly, part of the 50S ribosomal subunit.

Functionally, this protein is one of the early assembly proteins of the 50S ribosomal subunit, although it is not seen to bind rRNA by itself. It is important during the early stages of 50S assembly. In Burkholderia mallei (strain NCTC 10247), this protein is Large ribosomal subunit protein uL13.